Reading from the N-terminus, the 93-residue chain is Large ribosomal subunit protein uL23cz/uL23cy (93 aa).

This sequence belongs to the universal ribosomal protein uL23 family. Part of the 50S ribosomal subunit.

The protein localises to the plastid. It is found in the chloroplast. Its function is as follows. Binds to 23S rRNA. In Panax ginseng (Korean ginseng), this protein is Large ribosomal subunit protein uL23cz/uL23cy (rpl23-A).